The following is an 81-amino-acid chain: Sulfur carrier protein TusA (81 aa).

The Cysteine persulfide intermediate role is filled by cysteine 19.

This sequence belongs to the sulfur carrier protein TusA family. As to quaternary structure, interacts with IscS.

It localises to the cytoplasm. Its pathway is tRNA modification. Its function is as follows. Sulfur carrier protein involved in sulfur trafficking in the cell. Part of a sulfur-relay system required for 2-thiolation during synthesis of 2-thiouridine of the modified wobble base 5-methylaminomethyl-2-thiouridine (mnm(5)s(2)U) in tRNA. Interacts with IscS and stimulates its cysteine desulfurase activity. Accepts an activated sulfur from IscS, which is then transferred to TusD, and thus determines the direction of sulfur flow from IscS to 2-thiouridine formation. Also appears to be involved in sulfur transfer for the biosynthesis of molybdopterin. The sequence is that of Sulfur carrier protein TusA from Citrobacter koseri (strain ATCC BAA-895 / CDC 4225-83 / SGSC4696).